Consider the following 127-residue polypeptide: Small ribosomal subunit protein uS11 (127 aa).

The protein belongs to the universal ribosomal protein uS11 family. Part of the 30S ribosomal subunit. Interacts with proteins S7 and S18. Binds to IF-3.

Its function is as follows. Located on the platform of the 30S subunit, it bridges several disparate RNA helices of the 16S rRNA. Forms part of the Shine-Dalgarno cleft in the 70S ribosome. This Rickettsia rickettsii (strain Iowa) protein is Small ribosomal subunit protein uS11.